Consider the following 484-residue polypeptide: tRNA sulfurtransferase (484 aa).

One can recognise a THUMP domain in the interval 63 to 167; the sequence is REMIERLTCT…LDRLFVIHRQ (105 aa). Residues 185–186, Lys267, Gly289, and Gln298 each bind ATP; that span reads LM. Cys346 and Cys457 are oxidised to a cystine. Residues 405 to 483 form the Rhodanese domain; sequence VLPGQIVIDI…GHTNVRVYRP (79 aa). Cys457 functions as the Cysteine persulfide intermediate in the catalytic mechanism.

The protein belongs to the ThiI family.

Its subcellular location is the cytoplasm. It catalyses the reaction [ThiI sulfur-carrier protein]-S-sulfanyl-L-cysteine + a uridine in tRNA + 2 reduced [2Fe-2S]-[ferredoxin] + ATP + H(+) = [ThiI sulfur-carrier protein]-L-cysteine + a 4-thiouridine in tRNA + 2 oxidized [2Fe-2S]-[ferredoxin] + AMP + diphosphate. It carries out the reaction [ThiS sulfur-carrier protein]-C-terminal Gly-Gly-AMP + S-sulfanyl-L-cysteinyl-[cysteine desulfurase] + AH2 = [ThiS sulfur-carrier protein]-C-terminal-Gly-aminoethanethioate + L-cysteinyl-[cysteine desulfurase] + A + AMP + 2 H(+). The protein operates within cofactor biosynthesis; thiamine diphosphate biosynthesis. Its function is as follows. Catalyzes the ATP-dependent transfer of a sulfur to tRNA to produce 4-thiouridine in position 8 of tRNAs, which functions as a near-UV photosensor. Also catalyzes the transfer of sulfur to the sulfur carrier protein ThiS, forming ThiS-thiocarboxylate. This is a step in the synthesis of thiazole, in the thiamine biosynthesis pathway. The sulfur is donated as persulfide by IscS. The polypeptide is tRNA sulfurtransferase (Pseudomonas aeruginosa (strain LESB58)).